Consider the following 314-residue polypeptide: MVAPVWYLVAAALLVGFILFLTRSRGRAASAGQEPLHNEELAGAGRVAQPGPLEPEEPRAGGRPRRRRDLGSRLQAQRRAQRVAWAEADENEEEAVILAQEEEGVEKPAETHLSGKIGAKKLRKLEEKQARKAQREAEEAEREERKRLESQREAEWKKEEERLRLEEEQKEEEERKAREEQAQREHEEYLKLKEAFVVEEEGVGETMTEEQSQSFLTEFINYIKQSKVVLLEDLASQVGLRTQDTINRIQDLLAEGTITGVIDDRGKFIYITPEELAAVANFIRQRGRVSIAELAQASNSLIAWGRESPAQAPA.

A helical membrane pass occupies residues 1-28 (MVAPVWYLVAAALLVGFILFLTRSRGRA). Residues 1–114 (MVAPVWYLVA…VEKPAETHLS (114 aa)) are mediates interaction with CDK5RAP3. At 29–314 (ASAGQEPLHN…GRESPAQAPA (286 aa)) the chain is on the cytoplasmic side. 2 disordered regions span residues 31 to 75 (AGQE…SRLQ) and 100 to 186 (QEEE…QREH). 2 positions are modified to phosphoserine: Ser-72 and Ser-114. Residues 118-216 (GAKKLRKLEE…MTEEQSQSFL (99 aa)) are mediates interaction with TRIP4. Over residues 124–186 (KLEEKQARKA…AREEQAQREH (63 aa)) the composition is skewed to basic and acidic residues. A UFM1-interacting motif (UFIM) motif is present at residues 195-209 (AFVVEEEGVGETMTE). A mediates interaction with UFL1 region spans residues 216 to 314 (LTEFINYIKQ…GRESPAQAPA (99 aa)). One can recognise a PCI domain in the interval 229–273 (VLLEDLASQVGLRTQDTINRIQDLLAEGTITGVIDDRGKFIYITP). Lys-267 is covalently cross-linked (Glycyl lysine isopeptide (Lys-Gly) (interchain with G-Cter in UFM1)).

The protein belongs to the DDRGK1 family. In terms of assembly, component of the UFM1 ribosome E3 ligase (UREL) complex, composed of UFL1, DDRGK1 and CDK5RAP3. Interacts with (unphosphorylated) ERN1/IRE1-alpha; interaction is dependent on UFM1 and takes place in response to endoplasmic reticulum stress, regulating ERN1/IRE1-alpha stability. Interacts with NFKBIA. Interacts with SOX9. Ubiquitinated. Ubiquitination probably triggers proteasomal degradation and is negatively regulated by UFL1, the enzyme involved in the ufmylation of DDRGK1. Post-translationally, ufmylated; conjugated to ubiquitin-like protein UFM1, probably at Lys-267 by UFL1. The relevance of ufmylation is however unclear: as DDRGK1 acts as a substrate adapters for ufmylation, it is uncertain whether ufmylation is a collateral effect of ufmylation process or is required to regulate its activity. Widely expressed (at protein level). In the brain, highest levels in medulla oblongata, followed by cerebral cortex, cerebellum and frontal lobe.

The protein resides in the endoplasmic reticulum membrane. Its function is as follows. Component of the UFM1 ribosome E3 ligase (UREL) complex, a multiprotein complex that catalyzes ufmylation of endoplasmic reticulum-docked proteins. The UREL complex plays a key role in ribosome recycling by mediating mono-ufmylation of the RPL26/uL24 subunit of the 60S ribosome following ribosome dissociation: ufmylation weakens the junction between post-termination 60S subunits and SEC61 translocons, promoting release and recycling of the large ribosomal subunit from the endoplasmic reticulum membrane. Ufmylation of RPL26/uL24 and subsequent 60S ribosome recycling either take place after normal termination of translation or after ribosome stalling during cotranslational translocation at the endoplasmic reticulum. Within the UREL complex, DDRGK1 tethers the complex to the endoplasmic reticulum membrane to restrict its activity to endoplasmic reticulum-docked ribosomes and acts as an ufmylation 'reader': following RPL26/uL24 ufmylation, DDRGK1 specifically binds to ufmylated RPL26/uL24 via its UFIM motif, resulting in stable association between the 60S ribosome and the UREL complex, followed by dissociation of the 60S ribosome subunit from the endoplasmic reticulum membrane. The UREL complex is also involved in reticulophagy in response to endoplasmic reticulum stress by promoting ufmylation of proteins such as CYB5R3 and RPN1, thereby promoting lysosomal degradation of ufmylated proteins. Ufmylation-dependent reticulophagy inhibits the unfolded protein response (UPR) by regulating ERN1/IRE1-alpha stability. Acts as a regulator of immunity by promoting differentiation of B-cells into plasma cells: acts by promoting expansion of the endoplasmic reticulum and regulating the unfolded protein response (UPR). May also be required for TRIP4 ufmylation. May play a role in NF-kappa-B-mediated transcription through regulation of the phosphorylation and the degradation of NFKBIA, the inhibitor of NF-kappa-B. Plays a role in cartilage development through SOX9, inhibiting the ubiquitin-mediated proteasomal degradation of this transcriptional regulator. Required for stabilization and ufmylation of ATG9A. In Homo sapiens (Human), this protein is DDRGK domain-containing protein 1.